Consider the following 172-residue polypeptide: Protein GrpE (172 aa).

Belongs to the GrpE family. In terms of assembly, homodimer.

The protein localises to the cytoplasm. In terms of biological role, participates actively in the response to hyperosmotic and heat shock by preventing the aggregation of stress-denatured proteins, in association with DnaK and GrpE. It is the nucleotide exchange factor for DnaK and may function as a thermosensor. Unfolded proteins bind initially to DnaJ; upon interaction with the DnaJ-bound protein, DnaK hydrolyzes its bound ATP, resulting in the formation of a stable complex. GrpE releases ADP from DnaK; ATP binding to DnaK triggers the release of the substrate protein, thus completing the reaction cycle. Several rounds of ATP-dependent interactions between DnaJ, DnaK and GrpE are required for fully efficient folding. This chain is Protein GrpE, found in Thermotoga sp. (strain RQ2).